We begin with the raw amino-acid sequence, 115 residues long: MKCGVCLCVVMAVLAAGALAQPVVPVEAVDPMEQRAEEAPRRQLRAVLRPDSEPRARLGALLARYIQQVRKAPSGRMSVLKNLQGLDPSHRISDRDYMGWMDFGRRSAEDYEYPS.

The first 20 residues, 1–20 (MKCGVCLCVVMAVLAAGALA), serve as a signal peptide directing secretion. Propeptides lie at residues 21–45 (QPVV…RQLR) and 47–63 (VLRP…ALLA). The residue at position 97 (tyrosine 97) is a Sulfotyrosine. Phenylalanine 103 carries the post-translational modification Phenylalanine amide. Positions 107-115 (SAEDYEYPS) are excised as a propeptide. Sulfotyrosine occurs at positions 111 and 113.

It belongs to the gastrin/cholecystokinin family. Binds to CCK-A receptors in the pancreas and CCK-B receptors in the brain. Post-translationally, the precursor is cleaved by proteases to produce a number of active cholecystokinins. Sulfation of Tyr-97 is essential for receptor activation. As to expression, the shortest form (CCK8) is predominantly found in the brain, whereas the larger ones are found in the intestine.

It is found in the secreted. In terms of biological role, this peptide hormone induces gall bladder contraction and the release of pancreatic enzymes in the gut. Its function in the brain is not clear. Binding to CCK-A receptors stimulates amylase release from the pancreas, binding to CCK-B receptors stimulates gastric acid secretion. This is Cholecystokinin (Cck) from Rattus norvegicus (Rat).